Here is a 121-residue protein sequence, read N- to C-terminus: Flagellar protein FliT (121 aa).

Residues 1-50 form a required for homodimerization region; sequence MNNAPHLYFAWQQLVEKSQLMLRLATEEQWDELIASEMAYVNAVQEIAHL. Positions 60-98 are fliD binding; sequence MQEQLRPMLRLILDNESKVKQLLQIRMDELAKLVGQSSV.

It belongs to the FliT family. In terms of assembly, homodimer. Interacts with FliD and FlhC.

It localises to the cytoplasm. Its subcellular location is the cytosol. Its function is as follows. Dual-function protein that regulates the transcription of class 2 flagellar operons and that also acts as an export chaperone for the filament-capping protein FliD. As a transcriptional regulator, acts as an anti-FlhDC factor; it directly binds FlhC, thus inhibiting the binding of the FlhC/FlhD complex to class 2 promoters, resulting in decreased expression of class 2 flagellar operons. As a chaperone, effects FliD transition to the membrane by preventing its premature polymerization, and by directing it to the export apparatus. In Escherichia coli O9:H4 (strain HS), this protein is Flagellar protein FliT.